The chain runs to 116 residues: MMSKIVLVGLVGSAAAFNAPMMTVRRDAIATGAAAAVVAPILRPAGAAMKKNSKAPCVTIFDERDGCGGPTRAKTGAGEEGLMVKIQMQEIKLGRGAGAEYVSIFTNYDKKLFGVK.

Ser-53, Glu-63, Arg-64, Cys-67, and Lys-85 together coordinate (2R,3E)-phycoerythrobilin.

The protein belongs to the phycoerythrin family. As to quaternary structure, heterotetramer of 2 different alpha chains and 2 identical beta chains which form 2 alpha-beta heterodimers within the heterotetramer. The two alpha-beta heterodimers are rotated to an open configuration in contrast to the closed configuration found in other cryptophyte species due to the insertion of a single amino acid, Asp-65, in a conserved region of the alpha chain. In the open form, the central chromophores are not in physical contact but are separated by a water-filled channel. In terms of processing, contains three phycoerythrobilin chromophores with binding mediated by both the alpha and beta subunits.

The protein resides in the plastid. The protein localises to the chloroplast thylakoid membrane. Its function is as follows. Light-harvesting photosynthetic tetrapyrrole chromophore-protein from the phycobiliprotein complex. The chain is Phycoerythrin alpha-3 subunit from Hemiselmis andersenii (Cryptophyte alga).